The following is a 509-amino-acid chain: 2,3-bisphosphoglycerate-independent phosphoglycerate mutase (509 aa).

D12 and S62 together coordinate Mn(2+). The active-site Phosphoserine intermediate is S62. Substrate-binding positions include H123, R153–D154, R185, R191, R260–R263, and K333. 5 residues coordinate Mn(2+): D400, H404, D441, H442, and H460.

Belongs to the BPG-independent phosphoglycerate mutase family. As to quaternary structure, monomer. Requires Mn(2+) as cofactor.

The enzyme catalyses (2R)-2-phosphoglycerate = (2R)-3-phosphoglycerate. It participates in carbohydrate degradation; glycolysis; pyruvate from D-glyceraldehyde 3-phosphate: step 3/5. Its function is as follows. Catalyzes the interconversion of 2-phosphoglycerate and 3-phosphoglycerate. In Clostridium botulinum (strain ATCC 19397 / Type A), this protein is 2,3-bisphosphoglycerate-independent phosphoglycerate mutase.